A 601-amino-acid chain; its full sequence is Glutamine--fructose-6-phosphate aminotransferase [isomerizing] (601 aa).

The active-site Nucleophile; for GATase activity is the Cys2. One can recognise a Glutamine amidotransferase type-2 domain in the interval 2–218 (CGIVGYIGYD…DHEIVIVKKD (217 aa)). SIS domains are found at residues 284-423 (IIND…EHGR) and 453-591 (IATD…VDKP). The active-site For Fru-6P isomerization activity is the Lys596.

In terms of assembly, homodimer.

The protein resides in the cytoplasm. The enzyme catalyses D-fructose 6-phosphate + L-glutamine = D-glucosamine 6-phosphate + L-glutamate. Functionally, catalyzes the first step in hexosamine metabolism, converting fructose-6P into glucosamine-6P using glutamine as a nitrogen source. In Staphylococcus aureus (strain COL), this protein is Glutamine--fructose-6-phosphate aminotransferase [isomerizing].